The sequence spans 1111 residues: Putative leucine--tRNA ligase, cytoplasmic (1111 aa).

Residues 74–84 (PYMNGALHLGH) carry the 'HIGH' region motif. Phosphoserine is present on Ser-460. Positions 737-741 (KMSKS) match the 'KMSKS' region motif. Lys-740 is a binding site for ATP.

Belongs to the class-I aminoacyl-tRNA synthetase family.

Its subcellular location is the cytoplasm. The catalysed reaction is tRNA(Leu) + L-leucine + ATP = L-leucyl-tRNA(Leu) + AMP + diphosphate. The chain is Putative leucine--tRNA ligase, cytoplasmic (lrs1) from Schizosaccharomyces pombe (strain 972 / ATCC 24843) (Fission yeast).